An 829-amino-acid polypeptide reads, in one-letter code: Periplasmic nitrate reductase (829 aa).

The segment at residues methionine 1–alanine 36 is a signal peptide (tat-type signal). The 57-residue stretch at leucine 39–aspartate 95 folds into the 4Fe-4S Mo/W bis-MGD-type domain. The [4Fe-4S] cluster site is built by cysteine 46, cysteine 49, cysteine 53, and cysteine 81. Mo-bis(molybdopterin guanine dinucleotide)-binding positions include lysine 83, glutamine 150, asparagine 175, cysteine 179, tryptophan 212 to methionine 219, serine 243 to histidine 247, glutamine 262 to aspartate 264, methionine 373, glutamine 377, asparagine 483, serine 509 to aspartate 510, lysine 532, aspartate 559, and threonine 719 to serine 728. Tryptophan 795 is a substrate binding site. Mo-bis(molybdopterin guanine dinucleotide)-binding residues include asparagine 803 and lysine 820.

Belongs to the prokaryotic molybdopterin-containing oxidoreductase family. NasA/NapA/NarB subfamily. Component of the periplasmic nitrate reductase NapAB complex composed of NapA and NapB. Requires [4Fe-4S] cluster as cofactor. Mo-bis(molybdopterin guanine dinucleotide) is required as a cofactor. Predicted to be exported by the Tat system. The position of the signal peptide cleavage has not been experimentally proven.

The protein resides in the periplasm. It catalyses the reaction 2 Fe(II)-[cytochrome] + nitrate + 2 H(+) = 2 Fe(III)-[cytochrome] + nitrite + H2O. Catalytic subunit of the periplasmic nitrate reductase complex NapAB. Receives electrons from NapB and catalyzes the reduction of nitrate to nitrite. The protein is Periplasmic nitrate reductase of Bordetella bronchiseptica (strain ATCC BAA-588 / NCTC 13252 / RB50) (Alcaligenes bronchisepticus).